The sequence spans 319 residues: Annexin A4 (319 aa).

Phosphothreonine is present on Thr7. Ser12 carries the post-translational modification Phosphoserine. Annexin repeat units lie at residues 14-85, 86-157, 169-241, and 245-316; these read FNAT…GMMT, PTVL…SLTA, ALVR…AIVK, and NKPA…ILCG. Residues Lys213, Lys293, and Lys300 each carry the N6-acetyllysine modification.

It belongs to the annexin family.

The protein resides in the zymogen granule membrane. Calcium/phospholipid-binding protein which promotes membrane fusion and is involved in exocytosis. The sequence is that of Annexin A4 (Anxa4) from Rattus norvegicus (Rat).